Reading from the N-terminus, the 372-residue chain is Queuine tRNA-ribosyltransferase (372 aa).

Catalysis depends on D92, which acts as the Proton acceptor. Residues D92–F96, D146, Q188, and G215 each bind substrate. The RNA binding stretch occupies residues G246–E252. Residue D265 is the Nucleophile of the active site. The segment at T270–R274 is RNA binding; important for wobble base 34 recognition. Residues C303, C305, C308, and H334 each coordinate Zn(2+).

Belongs to the queuine tRNA-ribosyltransferase family. Homodimer. Within each dimer, one monomer is responsible for RNA recognition and catalysis, while the other monomer binds to the replacement base PreQ1. Zn(2+) serves as cofactor.

It catalyses the reaction 7-aminomethyl-7-carbaguanine + guanosine(34) in tRNA = 7-aminomethyl-7-carbaguanosine(34) in tRNA + guanine. Its pathway is tRNA modification; tRNA-queuosine biosynthesis. Its function is as follows. Catalyzes the base-exchange of a guanine (G) residue with the queuine precursor 7-aminomethyl-7-deazaguanine (PreQ1) at position 34 (anticodon wobble position) in tRNAs with GU(N) anticodons (tRNA-Asp, -Asn, -His and -Tyr). Catalysis occurs through a double-displacement mechanism. The nucleophile active site attacks the C1' of nucleotide 34 to detach the guanine base from the RNA, forming a covalent enzyme-RNA intermediate. The proton acceptor active site deprotonates the incoming PreQ1, allowing a nucleophilic attack on the C1' of the ribose to form the product. After dissociation, two additional enzymatic reactions on the tRNA convert PreQ1 to queuine (Q), resulting in the hypermodified nucleoside queuosine (7-(((4,5-cis-dihydroxy-2-cyclopenten-1-yl)amino)methyl)-7-deazaguanosine). The protein is Queuine tRNA-ribosyltransferase of Prochlorococcus marinus (strain MIT 9303).